The primary structure comprises 159 residues: Ribosomal RNA large subunit methyltransferase H (159 aa).

Residues leucine 76, glycine 108, and 127–132 (FGLLTL) contribute to the S-adenosyl-L-methionine site.

This sequence belongs to the RNA methyltransferase RlmH family. In terms of assembly, homodimer.

Its subcellular location is the cytoplasm. The enzyme catalyses pseudouridine(1915) in 23S rRNA + S-adenosyl-L-methionine = N(3)-methylpseudouridine(1915) in 23S rRNA + S-adenosyl-L-homocysteine + H(+). In terms of biological role, specifically methylates the pseudouridine at position 1915 (m3Psi1915) in 23S rRNA. This chain is Ribosomal RNA large subunit methyltransferase H, found in Leuconostoc citreum (strain KM20).